Consider the following 210-residue polypeptide: Na(+)-translocating NADH-quinone reductase subunit D (210 aa).

6 helical membrane passes run 14 to 34 (PIINNNPIALQILGVCSALAV), 42 to 62 (LVMTIALTAVTAFSNLFISLI), 72 to 92 (IIVQMTIIASLVIVVDQVLQA), 96 to 116 (AISKQLSVFVGLIITNCIVMG), 131 to 151 (FMDGIGNGLGYGAILLSVGVV), and 178 to 198 (NGLLLLPPSAFFLIGGLIWLI).

The protein belongs to the NqrDE/RnfAE family. As to quaternary structure, composed of six subunits; NqrA, NqrB, NqrC, NqrD, NqrE and NqrF.

Its subcellular location is the cell inner membrane. The enzyme catalyses a ubiquinone + n Na(+)(in) + NADH + H(+) = a ubiquinol + n Na(+)(out) + NAD(+). Functionally, NQR complex catalyzes the reduction of ubiquinone-1 to ubiquinol by two successive reactions, coupled with the transport of Na(+) ions from the cytoplasm to the periplasm. NqrA to NqrE are probably involved in the second step, the conversion of ubisemiquinone to ubiquinol. The polypeptide is Na(+)-translocating NADH-quinone reductase subunit D (Shewanella frigidimarina (strain NCIMB 400)).